A 289-amino-acid polypeptide reads, in one-letter code: 4-diphosphocytidyl-2-C-methyl-D-erythritol kinase (289 aa).

Lys13 is an active-site residue. 101-111 (PMGGGLGGGSS) provides a ligand contact to ATP. The active site involves Asp143.

Belongs to the GHMP kinase family. IspE subfamily.

The catalysed reaction is 4-CDP-2-C-methyl-D-erythritol + ATP = 4-CDP-2-C-methyl-D-erythritol 2-phosphate + ADP + H(+). It participates in isoprenoid biosynthesis; isopentenyl diphosphate biosynthesis via DXP pathway; isopentenyl diphosphate from 1-deoxy-D-xylulose 5-phosphate: step 3/6. In terms of biological role, catalyzes the phosphorylation of the position 2 hydroxy group of 4-diphosphocytidyl-2C-methyl-D-erythritol. In Janthinobacterium sp. (strain Marseille) (Minibacterium massiliensis), this protein is 4-diphosphocytidyl-2-C-methyl-D-erythritol kinase.